A 210-amino-acid chain; its full sequence is MRYPFWRLAVFLAACVAPVWWLYQAWIFALGPDPGKVLVENFGLATLVMLLITLAMTPLQRLTGWPGWIVVRRQLGLWCFAYVVLHMTMYALFILGLDWGQLGVELVKRPYIIVGALAFLGLLALAVTSNRYSQRRLGSRWKKLHRLVYVILGLGLLHMFWIVRADLKEWALYAGIGAILLLLRVPMIARRIPRLGGAAKAGSIKVQNNG.

The next 6 helical transmembrane spans lie at 8-28, 37-57, 75-95, 110-130, 147-167, and 169-189; these read LAVF…AWIF, VLVE…LAMT, LGLW…LFIL, PYII…VTSN, LVYV…RADL, and EWAL…PMIA.

The protein belongs to the MsrQ family. In terms of assembly, heterodimer of a catalytic subunit (MsrP) and a heme-binding subunit (MsrQ). It depends on FMN as a cofactor. Requires heme b as cofactor.

The protein resides in the cell inner membrane. Its function is as follows. Part of the MsrPQ system that repairs oxidized periplasmic proteins containing methionine sulfoxide residues (Met-O), using respiratory chain electrons. Thus protects these proteins from oxidative-stress damage caused by reactive species of oxygen and chlorine generated by the host defense mechanisms. MsrPQ is essential for the maintenance of envelope integrity under bleach stress, rescuing a wide series of structurally unrelated periplasmic proteins from methionine oxidation. MsrQ provides electrons for reduction to the reductase catalytic subunit MsrP, using the quinone pool of the respiratory chain. This chain is Protein-methionine-sulfoxide reductase heme-binding subunit MsrQ, found in Pseudomonas syringae pv. tomato (strain ATCC BAA-871 / DC3000).